The sequence spans 316 residues: Pantothenate kinase (316 aa).

95-102 (GSVAVGKS) contacts ATP.

Belongs to the prokaryotic pantothenate kinase family.

Its subcellular location is the cytoplasm. It carries out the reaction (R)-pantothenate + ATP = (R)-4'-phosphopantothenate + ADP + H(+). It functions in the pathway cofactor biosynthesis; coenzyme A biosynthesis; CoA from (R)-pantothenate: step 1/5. The polypeptide is Pantothenate kinase (Shewanella putrefaciens (strain CN-32 / ATCC BAA-453)).